The primary structure comprises 64 residues: MAFDKKLLEVLACPVCKGKLVLNEDMTQLVCRFDRLAFDIKDGIPVLIESKATALSLDEVDATR.

Belongs to the UPF0434 family.

In Alteromonas mediterranea (strain DSM 17117 / CIP 110805 / LMG 28347 / Deep ecotype), this protein is UPF0434 protein MADE_1009415.